The chain runs to 289 residues: Phosphatidylglycerol--prolipoprotein diacylglyceryl transferase (289 aa).

A run of 3 helical transmembrane segments spans residues leucine 13–tryptophan 33, phenylalanine 61–tyrosine 81, and glycine 99–methionine 119. Position 144 (arginine 144) interacts with a 1,2-diacyl-sn-glycero-3-phospho-(1'-sn-glycerol). The next 2 membrane-spanning stretches (helical) occupy residues glycine 218 to valine 238 and leucine 250 to isoleucine 270.

This sequence belongs to the Lgt family.

It localises to the cell inner membrane. The catalysed reaction is L-cysteinyl-[prolipoprotein] + a 1,2-diacyl-sn-glycero-3-phospho-(1'-sn-glycerol) = an S-1,2-diacyl-sn-glyceryl-L-cysteinyl-[prolipoprotein] + sn-glycerol 1-phosphate + H(+). Its pathway is protein modification; lipoprotein biosynthesis (diacylglyceryl transfer). Functionally, catalyzes the transfer of the diacylglyceryl group from phosphatidylglycerol to the sulfhydryl group of the N-terminal cysteine of a prolipoprotein, the first step in the formation of mature lipoproteins. The sequence is that of Phosphatidylglycerol--prolipoprotein diacylglyceryl transferase from Phenylobacterium zucineum (strain HLK1).